Reading from the N-terminus, the 413-residue chain is Zeaxanthin glucosyltransferase (413 aa).

This sequence belongs to the UDP-glycosyltransferase family.

The catalysed reaction is all-trans-zeaxanthin + 2 UDP-alpha-D-glucose = zeaxanthin bis(beta-D-glucoside) + 2 UDP + 2 H(+). It participates in carotenoid biosynthesis; zeaxanthin diglucoside biosynthesis. Its function is as follows. Catalyzes the glycosylation reaction which converts zeaxanthin to zeaxanthin bis(beta-D-glucoside). The reaction proceeds in two steps with the monoglucoside as an intermediate. The protein is Zeaxanthin glucosyltransferase (crtX) of Pseudescherichia vulneris (Escherichia vulneris).